The following is a 249-amino-acid chain: Probable septum site-determining protein MinC (249 aa).

Positions 116-149 are disordered; the sequence is AAVSPPPPPPPPPARAEPAAPVARPAPGRMQRNA. The span at 119–130 shows a compositional bias: pro residues; the sequence is SPPPPPPPPPAR. Low complexity predominate over residues 131–142; it reads AEPAAPVARPAP.

This sequence belongs to the MinC family. Interacts with MinD and FtsZ.

Functionally, cell division inhibitor that blocks the formation of polar Z ring septums. Rapidly oscillates between the poles of the cell to destabilize FtsZ filaments that have formed before they mature into polar Z rings. Prevents FtsZ polymerization. The sequence is that of Probable septum site-determining protein MinC from Xanthomonas campestris pv. campestris (strain B100).